Consider the following 163-residue polypeptide: Nucleotide-binding protein Acel_0286 (163 aa).

This sequence belongs to the YajQ family.

Nucleotide-binding protein. The protein is Nucleotide-binding protein Acel_0286 of Acidothermus cellulolyticus (strain ATCC 43068 / DSM 8971 / 11B).